The sequence spans 490 residues: Glutathione hydrolase 6 (490 aa).

Residues Met-1–Pro-52 are Cytoplasmic-facing. A helical; Signal-anchor for type II membrane protein transmembrane segment spans residues Gly-53–Val-73. Residues Arg-74 to Phe-490 lie on the Extracellular side of the membrane. N-linked (GlcNAc...) asparagine glycans are attached at residues Asn-160, Asn-165, and Asn-374.

The protein belongs to the gamma-glutamyltransferase family. Heterodimer composed of the light and heavy chains. The active site is located in the light chain. Post-translationally, cleaved by autocatalysis into a large and a small subunit and the autocatalytic cleavage is essential to the functional activation of the enzyme.

It is found in the membrane. The catalysed reaction is an N-terminal (5-L-glutamyl)-[peptide] + an alpha-amino acid = 5-L-glutamyl amino acid + an N-terminal L-alpha-aminoacyl-[peptide]. The enzyme catalyses glutathione + H2O = L-cysteinylglycine + L-glutamate. It carries out the reaction an S-substituted glutathione + H2O = an S-substituted L-cysteinylglycine + L-glutamate. Its pathway is sulfur metabolism; glutathione metabolism. Functionally, hydrolyzes and transfers gamma-glutamyl moieties from glutathione and other gamma-glutamyl compounds to acceptors. The polypeptide is Glutathione hydrolase 6 (Bos taurus (Bovine)).